The primary structure comprises 700 residues: Myb-related protein B (700 aa).

HTH myb-type domains follow at residues 26–77 (RDSK…LRVL), 78–133 (NPDL…NPEV), and 134–184 (KKSC…KRKV). Residues 54–77 (WKFLASHFPNRTDQQCQYRWLRVL) constitute a DNA-binding region (H-T-H motif). A Glycyl lysine isopeptide (Lys-Gly) (interchain with G-Cter in SUMO2) cross-link involves residue K104. 2 DNA-binding regions (H-T-H motif) span residues 106-129 (WTLIAKHLKGRLGKQCRERWHNHL) and 157-180 (WAEIAKMLPGRTDNAVKNHWNSTI). Glycyl lysine isopeptide (Lys-Gly) (interchain with G-Cter in SUMO2) cross-links involve residues K194 and K197. 2 disordered regions span residues 212–287 (LQSA…PETS) and 391–412 (PISPSTEVGGSGIGTPPSVLKR). Over residues 213–229 (QSAQPTEGQGSLLTNWP) the composition is skewed to polar residues. The residue at position 241 (S241) is a Phosphoserine. The residue at position 266 (T266) is a Phosphothreonine. K275 is covalently cross-linked (Glycyl lysine isopeptide (Lys-Gly) (interchain with G-Cter in SUMO2)). A phosphoserine mark is found at S282 and S393. K411 participates in a covalent cross-link: Glycyl lysine isopeptide (Lys-Gly) (interchain with G-Cter in SUMO2). The Nuclear localization signal signature appears at 411–417 (KRQRKRR). T440 and T444 each carry phosphothreonine; by CDK2. Glycyl lysine isopeptide (Lys-Gly) (interchain with G-Cter in SUMO2) cross-links involve residues K447 and K482. Residues T487 and T494 each carry the phosphothreonine; by CDK2 modification. A Glycyl lysine isopeptide (Lys-Gly) (interchain with G-Cter in SUMO2) cross-link involves residue K499. Phosphothreonine is present on T505. Residue K509 forms a Glycyl lysine isopeptide (Lys-Gly) (interchain with G-Cter in SUMO2) linkage. T520 is subject to Phosphothreonine; by CDK2. Residues K523, K533, and K546 each participate in a glycyl lysine isopeptide (Lys-Gly) (interchain with G-Cter in SUMO2) cross-link. Positions 564–584 (RPEKQKRKPGLRRSPIKKVRK) match the Bipartite nuclear localization signal motif. S577 is subject to Phosphoserine; by CDK2. Residues K584, K596, K625, K639, and K648 each participate in a glycyl lysine isopeptide (Lys-Gly) (interchain with G-Cter in SUMO2) cross-link.

In terms of assembly, component of the DREAM complex (also named LINC complex) at least composed of E2F4, E2F5, LIN9, LIN37, LIN52, LIN54, MYBL1, MYBL2, RBL1, RBL2, RBBP4, TFDP1 and TFDP2. The complex exists in quiescent cells where it represses cell cycle-dependent genes. It dissociates in S phase when LIN9, LIN37, LIN52 and LIN54 form a subcomplex that binds to MYBL22. Interacts with CCNF (via the Cyclin N-terminal domain). Post-translationally, phosphorylated by cyclin A/CDK2 during S-phase. Phosphorylation at Thr-520 is probably involved in transcriptional activity.

The protein localises to the nucleus. Functionally, transcription factor involved in the regulation of cell survival, proliferation, and differentiation. Transactivates the expression of the CLU gene. This chain is Myb-related protein B (MYBL2), found in Homo sapiens (Human).